The chain runs to 194 residues: Cysteine and glycine-rich protein 3 (194 aa).

Residues methionine 1–glycine 5 are interaction with TCAP. The 52-residue stretch at cysteine 10–cysteine 61 folds into the LIM zinc-binding 1 domain. A Nuclear localization signal motif is present at residues arginine 64–lysine 69. The interval glutamine 94 to serine 105 is interaction with CLF2 and isoform 2. A phosphoserine mark is found at serine 95 and serine 153. Positions cysteine 120–cysteine 171 constitute an LIM zinc-binding 2 domain.

In terms of assembly, self-associates. Oligomeric in the cytoplasm and monomeric in the nucleus. Homooligomers preferentially form along the actin cytoskeleton. Isoform 2 interacts with isoform 1. Isoform 1 but not isoform 2 interacts with MYOD1 and MYOG. Isoform 1 interacts with TCAP, ACTN2 and NRAP. Isoform 2 interacts with TCAP and alpha-actinin. Interacts with LDHD. Interacts (via N-terminus)with GLRX3 (via C-terminus) and PPP3CA; GLRX3 and calcineurin compete for interaction with CSRP3. Interacts with MYF6. Interacts with CFL2; the stoichiometry influences F-actin depolymerization and possibly two molecules of CFL2 can interact with one molecule of CSRP3 resulting in the highest functional impact; the interaction is stronger with phosphorylated CFL2. In terms of processing, phosphorylated by PKC/PRKCA. In terms of tissue distribution, cardiac and slow-twitch skeletal muscles. Isoform 2 is expressed in striated muscle. Isoform 2 is specifically expressed at higher levels in patients with neuromuscular diseases, such as limb-girdle muscular dystrophy 2A (LGMD2A), Duchenne muscular dystrophy (DMD) and dermatomyositis.

It is found in the nucleus. It localises to the cytoplasm. The protein resides in the cytoskeleton. The protein localises to the myofibril. Its subcellular location is the sarcomere. It is found in the z line. Its function is as follows. Positive regulator of myogenesis. Acts as a cofactor for myogenic bHLH transcription factors such as MYOD1, and probably MYOG and MYF6. Enhances the DNA-binding activity of the MYOD1:TCF3 isoform E47 complex and may promote formation of a functional MYOD1:TCF3 isoform E47:MEF2A complex involved in myogenesis. Plays a crucial and specific role in the organization of cytosolic structures in cardiomyocytes. Could play a role in mechanical stretch sensing. May be a scaffold protein that promotes the assembly of interacting proteins at Z-line structures. It is essential for calcineurin anchorage to the Z line. Required for stress-induced calcineurin-NFAT activation. The role in regulation of cytoskeleton dynamics by association with CFL2 is reported conflictingly: Shown to enhance CFL2-mediated F-actin depolymerization dependent on the CSRP3:CFL2 molecular ratio, and also shown to reduce the ability of CLF1 and CFL2 to enhance actin depolymerization. Proposed to contribute to the maintenance of muscle cell integrity through an actin-based mechanism. Can directly bind to actin filaments, cross-link actin filaments into bundles without polarity selectivity and protect them from dilution- and cofilin-mediated depolymerization; the function seems to involve its self-association. In vitro can inhibit PKC/PRKCA activity. Proposed to be involved in cardiac stress signaling by down-regulating excessive PKC/PRKCA signaling. May play a role in early sarcomere organization. Overexpression in myotubes negatively regulates myotube differentiation. By association with isoform 1 and thus changing the CSRP3 isoform 1:CFL2 stoichiometry is proposed to down-regulate CFL2-mediated F-actin depolymerization. The chain is Cysteine and glycine-rich protein 3 (CSRP3) from Homo sapiens (Human).